The following is a 487-amino-acid chain: Meiotic recombination protein SPO11-4 (487 aa).

The tract at residues 1–56 (MDDSTDDDSYHPRKHYAYDRQVSSSRWRTSREYIRGPGPETHTTESAQDGQDPPAG) is disordered. Positions 119–252 (KSRVEARKTL…LGIIAAEKGI (134 aa)) constitute a Topo IIA-type catalytic domain. Catalysis depends on tyrosine 213, which acts as the O-(5'-phospho-DNA)-tyrosine intermediate. Residues glutamate 301 and aspartate 353 each contribute to the Mg(2+) site.

Belongs to the TOP6A family. Homodimer. Interacts with TOP6B. Requires Mg(2+) as cofactor.

The protein localises to the nucleus. The enzyme catalyses ATP-dependent breakage, passage and rejoining of double-stranded DNA.. Required for meiotic recombination. Mediates DNA cleavage that forms the double-strand breaks (DSB) that initiate meiotic recombination. Possesses double-stranded DNA cleavage activity in vitro. The chain is Meiotic recombination protein SPO11-4 (SPO11-4) from Oryza sativa subsp. japonica (Rice).